The chain runs to 375 residues: Alcohol dehydrogenase 1C (375 aa).

At serine 2 the chain carries N-acetylserine. Residue serine 23 is modified to Phosphoserine. Zn(2+)-binding residues include cysteine 47, histidine 68, cysteine 98, cysteine 101, cysteine 104, cysteine 112, and cysteine 175. NAD(+) contacts are provided by residues 200-205 (GLGGVG), aspartate 224, lysine 229, isoleucine 270, 293-295 (VGV), 318-320 (AIF), and arginine 370.

Belongs to the zinc-containing alcohol dehydrogenase family. In terms of assembly, dimer of identical or non-identical chains of class I alcohol dehydrogenase: ADH1A, ADH1B, and ADH1C. The cofactor is Zn(2+).

The protein resides in the cytoplasm. It carries out the reaction a primary alcohol + NAD(+) = an aldehyde + NADH + H(+). The catalysed reaction is ethanol + NAD(+) = acetaldehyde + NADH + H(+). Its function is as follows. Alcohol dehydrogenase. Exhibits high activity for ethanol oxidation and plays a major role in ethanol catabolism. This Homo sapiens (Human) protein is Alcohol dehydrogenase 1C (ADH1C).